Consider the following 88-residue polypeptide: Alpha-conotoxin GVIIIB (88 aa).

The first 20 residues, 1-20 (MMSKMGAMFVLLLLFTLASS), serve as a signal peptide directing secretion. Positions 21–43 (QQEGDVQARKTRPKSDFYRALPR) are excised as a propeptide. A Threonine amide modification is found at T87.

Belongs to the conotoxin S superfamily. Post-translationally, contains 5 disulfide bonds. In terms of processing, the predominant peptide contains 2 hydroxyprolines, while 2 minor peptides contains 1 and 3 hydroxyprolines. Expressed by the venom duct.

It is found in the secreted. Alpha-conotoxins act on postsynaptic membranes, they bind to the nicotinic acetylcholine receptors (nAChR) and thus inhibit them. This toxin shows high activity on alpha-9-alpha-10 (CHRNA9-CHRNA10) (IC(50)=9.79 nM). It also shows weak activity on alpha-3-beta-2 (CHRNA3-CHRNB2) (IC(50)~1 uM), alpha-6/alpha-3-beta-2-beta-3 (CHRNA6/CHRNA3-CHRNB2-CHRNB3) (IC(50)~1 uM). The toxin binds to the same or overlapping binding sites than conotoxin RgIA (AC P0C1D0). This chain is Alpha-conotoxin GVIIIB, found in Conus geographus (Geography cone).